The chain runs to 170 residues: MPRSRANGNFIDKTSSIVANILLRIIPTTSGEKKAFTYYRDGMLAQSEGNYAEALQNYYEATRLEIDPYDRSYILYNIGLIHTSNGEHTKALEYYFRALERNPFLPQAFNNMAVICHYRGEQAILQGDSEIAEAWFDQAAEYWKQAIALTPGNYIEAQNWLKITKRFEFE.

TPR repeat units lie at residues 35 to 68 (AFTYYRDGMLAQSEGNYAEALQNYYEATRLEIDP), 72 to 105 (SYILYNIGLIHTSNGEHTKALEYYFRALERNPFL), and 120 to 153 (GEQAILQGDSEIAEAWFDQAAEYWKQAIALTPGN).

The protein belongs to the Ycf3 family.

It localises to the plastid. The protein resides in the chloroplast thylakoid membrane. In terms of biological role, essential for the assembly of the photosystem I (PSI) complex. May act as a chaperone-like factor to guide the assembly of the PSI subunits. This Agrostis stolonifera (Creeping bentgrass) protein is Photosystem I assembly protein Ycf3.